A 243-amino-acid polypeptide reads, in one-letter code: MTLEILYQDPYLIAVNKPAGMLVHRSWLDRHETQFVMQTLRDQIGQHVYPIHRLDRPTSGVLLFALSSEVANLLCLQFENKQVQKSYLAIVRGYLVGEGRIDYPLKVQLDKIADKFAQDDKAPQEAVTDYLGLAKVEMPYCVKKYPTTRYSLVRLIPHTGRKHQLRRHMKHLFHPILGDTQYGDLHQNRALTTHTGVQRLMLHAERLIFTHPITQQQITICAGVDQQWLDLINIFDWDLNSIH.

Asp55 is a catalytic residue.

It belongs to the pseudouridine synthase RluA family.

It catalyses the reaction uridine(65) in tRNA = pseudouridine(65) in tRNA. In terms of biological role, responsible for synthesis of pseudouridine from uracil-65 in transfer RNAs. This chain is tRNA pseudouridine synthase C (truC), found in Pasteurella multocida (strain Pm70).